The sequence spans 162 residues: Putative 4-hydroxy-4-methyl-2-oxoglutarate aldolase (162 aa).

Residues 75–78 and R97 each bind substrate; that span reads GDML. D98 contributes to the a divalent metal cation binding site.

Belongs to the class II aldolase/RraA-like family. As to quaternary structure, homotrimer. It depends on a divalent metal cation as a cofactor.

It carries out the reaction 4-hydroxy-4-methyl-2-oxoglutarate = 2 pyruvate. The enzyme catalyses oxaloacetate + H(+) = pyruvate + CO2. In terms of biological role, catalyzes the aldol cleavage of 4-hydroxy-4-methyl-2-oxoglutarate (HMG) into 2 molecules of pyruvate. Also contains a secondary oxaloacetate (OAA) decarboxylase activity due to the common pyruvate enolate transition state formed following C-C bond cleavage in the retro-aldol and decarboxylation reactions. In Pseudomonas aeruginosa (strain LESB58), this protein is Putative 4-hydroxy-4-methyl-2-oxoglutarate aldolase.